Here is a 339-residue protein sequence, read N- to C-terminus: DNA-directed RNA polymerase subunit alpha (339 aa).

Residues 1–235 (MVREEVAVST…DLFIPFLHGE (235 aa)) form an alpha N-terminal domain (alpha-NTD) region. Positions 267–339 (KAIALECIFI…FTIDLPKNKF (73 aa)) are alpha C-terminal domain (alpha-CTD).

It belongs to the RNA polymerase alpha chain family. In terms of assembly, in plastids the minimal PEP RNA polymerase catalytic core is composed of four subunits: alpha, beta, beta', and beta''. When a (nuclear-encoded) sigma factor is associated with the core the holoenzyme is formed, which can initiate transcription.

The protein localises to the plastid. It localises to the chloroplast. The catalysed reaction is RNA(n) + a ribonucleoside 5'-triphosphate = RNA(n+1) + diphosphate. In terms of biological role, DNA-dependent RNA polymerase catalyzes the transcription of DNA into RNA using the four ribonucleoside triphosphates as substrates. This chain is DNA-directed RNA polymerase subunit alpha, found in Drimys granadensis.